The sequence spans 460 residues: Probable carboxypeptidase ARB_01041 (460 aa).

An N-terminal signal peptide occupies residues 1-22; sequence MQKTYIWALVSLLASSLVDARS. The N-linked (GlcNAc...) asparagine glycan is linked to asparagine 98. Position 175 (aspartate 175) interacts with Zn(2+). The Proton acceptor role is filled by glutamate 207. Glutamate 208 serves as a coordination point for Zn(2+). An N-linked (GlcNAc...) asparagine glycan is attached at asparagine 395.

It belongs to the peptidase M20A family. The cofactor is Zn(2+).

It localises to the secreted. The protein is Probable carboxypeptidase ARB_01041 of Arthroderma benhamiae (strain ATCC MYA-4681 / CBS 112371) (Trichophyton mentagrophytes).